The primary structure comprises 257 residues: Ditrans,polycis-undecaprenyl-diphosphate synthase ((2E,6E)-farnesyl-diphosphate specific) (257 aa).

Aspartate 23 is a catalytic residue. Aspartate 23 contacts Mg(2+). Residues glycine 24 to arginine 27, tryptophan 28, arginine 36, histidine 40, and serine 68 to glutamate 70 contribute to the substrate site. Catalysis depends on asparagine 71, which acts as the Proton acceptor. Substrate is bound by residues tryptophan 72, arginine 74, arginine 191, and arginine 197–serine 199. Glutamate 210 lines the Mg(2+) pocket.

This sequence belongs to the UPP synthase family. In terms of assembly, homodimer. Requires Mg(2+) as cofactor.

The catalysed reaction is 8 isopentenyl diphosphate + (2E,6E)-farnesyl diphosphate = di-trans,octa-cis-undecaprenyl diphosphate + 8 diphosphate. In terms of biological role, catalyzes the sequential condensation of isopentenyl diphosphate (IPP) with (2E,6E)-farnesyl diphosphate (E,E-FPP) to yield (2Z,6Z,10Z,14Z,18Z,22Z,26Z,30Z,34E,38E)-undecaprenyl diphosphate (di-trans,octa-cis-UPP). UPP is the precursor of glycosyl carrier lipid in the biosynthesis of bacterial cell wall polysaccharide components such as peptidoglycan and lipopolysaccharide. The protein is Ditrans,polycis-undecaprenyl-diphosphate synthase ((2E,6E)-farnesyl-diphosphate specific) of Xanthomonas axonopodis pv. citri (strain 306).